The chain runs to 443 residues: D-inositol 3-phosphate glycosyltransferase (443 aa).

His-30 contributes to the 1D-myo-inositol 3-phosphate binding site. UDP-N-acetyl-alpha-D-glucosamine contacts are provided by residues 36-37 and Gly-44; that span reads QP. 1D-myo-inositol 3-phosphate contacts are provided by residues 41 to 46, Lys-99, Tyr-132, Thr-156, and Arg-176; that span reads DAGGMN. Arg-250, Lys-255, and Arg-316 together coordinate UDP-N-acetyl-alpha-D-glucosamine. 3 residues coordinate Mg(2+): Phe-325, Arg-326, and Cys-328. Glu-338 and Glu-346 together coordinate UDP-N-acetyl-alpha-D-glucosamine. Thr-352 serves as a coordination point for Mg(2+).

The protein belongs to the glycosyltransferase group 1 family. MshA subfamily. In terms of assembly, homodimer.

The catalysed reaction is 1D-myo-inositol 3-phosphate + UDP-N-acetyl-alpha-D-glucosamine = 1D-myo-inositol 2-acetamido-2-deoxy-alpha-D-glucopyranoside 3-phosphate + UDP + H(+). Functionally, catalyzes the transfer of a N-acetyl-glucosamine moiety to 1D-myo-inositol 3-phosphate to produce 1D-myo-inositol 2-acetamido-2-deoxy-glucopyranoside 3-phosphate in the mycothiol biosynthesis pathway. This is D-inositol 3-phosphate glycosyltransferase from Stackebrandtia nassauensis (strain DSM 44728 / CIP 108903 / NRRL B-16338 / NBRC 102104 / LLR-40K-21).